Consider the following 569-residue polypeptide: Proline--tRNA ligase (569 aa).

Belongs to the class-II aminoacyl-tRNA synthetase family. ProS type 1 subfamily. Homodimer.

It localises to the cytoplasm. It catalyses the reaction tRNA(Pro) + L-proline + ATP = L-prolyl-tRNA(Pro) + AMP + diphosphate. Functionally, catalyzes the attachment of proline to tRNA(Pro) in a two-step reaction: proline is first activated by ATP to form Pro-AMP and then transferred to the acceptor end of tRNA(Pro). As ProRS can inadvertently accommodate and process non-cognate amino acids such as alanine and cysteine, to avoid such errors it has two additional distinct editing activities against alanine. One activity is designated as 'pretransfer' editing and involves the tRNA(Pro)-independent hydrolysis of activated Ala-AMP. The other activity is designated 'posttransfer' editing and involves deacylation of mischarged Ala-tRNA(Pro). The misacylated Cys-tRNA(Pro) is not edited by ProRS. This chain is Proline--tRNA ligase, found in Dehalococcoides mccartyi (strain CBDB1).